The primary structure comprises 850 residues: Bifunctional levopimaradiene synthase, chloroplastic (850 aa).

A chloroplast-targeting transit peptide spans 1-52 (MALPSSSLSSQIHTGATTQCIPHFHGSLNAGTSAGKRRSLYLRWGKGPSKIV). Lys-250 is a binding site for substrate. Mg(2+) contacts are provided by Asp-383 and Asp-385. A DXDD motif motif is present at residues 383 to 386 (DIDD). A substrate-binding site is contributed by Lys-470. Mg(2+)-binding residues include Asp-602, Asp-606, Asn-746, Thr-750, and Glu-754. Positions 602–606 (DDLYD) match the DDXXD motif motif.

It belongs to the terpene synthase family. Tpsd subfamily. Requires Mg(2+) as cofactor.

The protein resides in the plastid. Its subcellular location is the chloroplast. It carries out the reaction (2E,6E,10E)-geranylgeranyl diphosphate = (+)-copalyl diphosphate. The enzyme catalyses (+)-copalyl diphosphate = abieta-7,13-diene + diphosphate. It catalyses the reaction (+)-copalyl diphosphate = abieta-8(14),12-diene + diphosphate. The catalysed reaction is (+)-copalyl diphosphate = neoabietadiene + diphosphate. It functions in the pathway terpene metabolism; oleoresin biosynthesis. Its function is as follows. Involved in defensive oleoresin formation in conifers in response to insect attack or other injury. Involved in diterpene (C20) olefins biosynthesis. Bifunctional enzyme that catalyzes two sequential cyclizations of geranylgeranyl diphosphate (GGPP) to levopimaradiene. Levopimaradiene is the major products of the enzyme with abietadiene and neoabietadiene. No activity with farnesyl diphosphate (FPP) as substrate. The polypeptide is Bifunctional levopimaradiene synthase, chloroplastic (Pinus contorta (Shore pine)).